The sequence spans 426 residues: Serine--tRNA ligase (426 aa).

233-235 contributes to the L-serine binding site; it reads TAE. 264 to 266 serves as a coordination point for ATP; sequence RSE. Glu-287 is a binding site for L-serine. Position 351–354 (351–354) interacts with ATP; the sequence is EISS. Ser-387 is an L-serine binding site.

This sequence belongs to the class-II aminoacyl-tRNA synthetase family. Type-1 seryl-tRNA synthetase subfamily. Homodimer. The tRNA molecule binds across the dimer.

The protein localises to the cytoplasm. It catalyses the reaction tRNA(Ser) + L-serine + ATP = L-seryl-tRNA(Ser) + AMP + diphosphate + H(+). The enzyme catalyses tRNA(Sec) + L-serine + ATP = L-seryl-tRNA(Sec) + AMP + diphosphate + H(+). It participates in aminoacyl-tRNA biosynthesis; selenocysteinyl-tRNA(Sec) biosynthesis; L-seryl-tRNA(Sec) from L-serine and tRNA(Sec): step 1/1. Catalyzes the attachment of serine to tRNA(Ser). Is also able to aminoacylate tRNA(Sec) with serine, to form the misacylated tRNA L-seryl-tRNA(Sec), which will be further converted into selenocysteinyl-tRNA(Sec). The polypeptide is Serine--tRNA ligase (Pseudomonas savastanoi pv. phaseolicola (strain 1448A / Race 6) (Pseudomonas syringae pv. phaseolicola (strain 1448A / Race 6))).